The sequence spans 173 residues: Ribulose bisphosphate carboxylase small subunit, chloroplastic 5 (173 aa).

The transit peptide at 1–49 (MASIPATVATVAQANMVAPFTGLKSNAAFPVTKKVNDFSTLPSNGGRVQ) directs the protein to the chloroplast.

Belongs to the RuBisCO small chain family. As to quaternary structure, heterohexadecamer of 8 large and 8 small subunits.

Its subcellular location is the plastid. It localises to the chloroplast. Its function is as follows. RuBisCO catalyzes two reactions: the carboxylation of D-ribulose 1,5-bisphosphate, the primary event in carbon dioxide fixation, as well as the oxidative fragmentation of the pentose substrate. Both reactions occur simultaneously and in competition at the same active site. Although the small subunit is not catalytic it is essential for maximal activity. This chain is Ribulose bisphosphate carboxylase small subunit, chloroplastic 5, found in Flaveria pringlei.